Reading from the N-terminus, the 799-residue chain is Signal transducer and activator of transcription 5A (799 aa).

Y90 is modified (phosphotyrosine). A Phosphoserine modification is found at S128. The 98-residue stretch at 589-686 folds into the SH2 domain; that stretch reads WNDGAILGFV…EVFSKYYTPV (98 aa). Position 682 is a phosphotyrosine (Y682). Y699 is modified (phosphotyrosine; by JAK2). The interval 778–799 is disordered; sequence DSLDPRLSPPAGLFASTRGSLS. S785 bears the Phosphoserine mark.

The protein belongs to the transcription factor STAT family. In terms of assembly, forms a homodimer or a heterodimer with a related family member. Binds NR3C1. Interacts with NCOA1 and SOCS7. Interacts with ERBB4. Interacts with EBF4. Interacts with CD69. Post-translationally, ISGylated. In terms of processing, tyrosine phosphorylated in response to KITLG/SCF, IL2, IL3, IL7, IL15, CSF2/GMCSF, GH1, PRL, EPO and THPO. Activated KIT promotes phosphorylation on tyrosine residues and subsequent translocation to the nucleus. Tyrosine phosphorylated in response to constitutively activated FGFR1, FGFR2, FGFR3 and FGFR4. Tyrosine phosphorylation is required for DNA-binding activity and dimerization. Serine phosphorylation is also required for maximal transcriptional activity. Tyrosine phosphorylated in response to signaling via activated FLT3; wild-type FLT3 results in much weaker phosphorylation than constitutively activated mutant FLT3. Alternatively, can be phosphorylated by JAK2 at Tyr-699.

It is found in the cytoplasm. The protein resides in the nucleus. Its function is as follows. Carries out a dual function: signal transduction and activation of transcription. Mediates cellular responses to the cytokine KITLG/SCF and other growth factors. May mediate cellular responses to activated FGFR1, FGFR2, FGFR3 and FGFR4. Binds to the GAS element and activates PRL-induced transcription. Regulates the expression of milk proteins during lactation. This is Signal transducer and activator of transcription 5A (STAT5A) from Sus scrofa (Pig).